We begin with the raw amino-acid sequence, 85 residues long: Conotoxin Lt28.2 (85 aa).

Residues 1 to 21 (MPKLEMMLLVLLILPLCYIDA) form the signal peptide. The propeptide occupies 22-40 (VGPPPPWNMEDEIIEHWQK).

Belongs to the conotoxin D superfamily. Contains 5 disulfide bonds. As to expression, expressed by the venom duct.

The protein resides in the secreted. Probable neurotoxin. The polypeptide is Conotoxin Lt28.2 (Conus litteratus (Lettered cone)).